The sequence spans 140 residues: Large ribosomal subunit protein uL11 (140 aa).

It belongs to the universal ribosomal protein uL11 family. As to quaternary structure, part of the ribosomal stalk of the 50S ribosomal subunit. Interacts with L10 and the large rRNA to form the base of the stalk. L10 forms an elongated spine to which L12 dimers bind in a sequential fashion forming a multimeric L10(L12)X complex. In terms of processing, one or more lysine residues are methylated.

Its function is as follows. Forms part of the ribosomal stalk which helps the ribosome interact with GTP-bound translation factors. The polypeptide is Large ribosomal subunit protein uL11 (Staphylococcus aureus (strain bovine RF122 / ET3-1)).